A 260-amino-acid polypeptide reads, in one-letter code: Triosephosphate isomerase (260 aa).

Residue 11-13 participates in substrate binding; sequence NWK. Catalysis depends on histidine 103, which acts as the Electrophile. Glutamate 175 (proton acceptor) is an active-site residue. Residues glycine 181, serine 220, and 241–242 each bind substrate; that span reads GG.

This sequence belongs to the triosephosphate isomerase family. Homodimer.

The protein resides in the cytoplasm. The catalysed reaction is D-glyceraldehyde 3-phosphate = dihydroxyacetone phosphate. Its pathway is carbohydrate biosynthesis; gluconeogenesis. It participates in carbohydrate degradation; glycolysis; D-glyceraldehyde 3-phosphate from glycerone phosphate: step 1/1. Its function is as follows. Involved in the gluconeogenesis. Catalyzes stereospecifically the conversion of dihydroxyacetone phosphate (DHAP) to D-glyceraldehyde-3-phosphate (G3P). The polypeptide is Triosephosphate isomerase (Shewanella frigidimarina (strain NCIMB 400)).